A 154-amino-acid chain; its full sequence is 6,7-dimethyl-8-ribityllumazine synthase (154 aa).

Residues phenylalanine 22, 56–58 (AFE), and 80–82 (AVI) each bind 5-amino-6-(D-ribitylamino)uracil. Residue 85-86 (AT) participates in (2S)-2-hydroxy-3-oxobutyl phosphate binding. Residue histidine 88 is the Proton donor of the active site. Phenylalanine 113 contacts 5-amino-6-(D-ribitylamino)uracil. Arginine 127 provides a ligand contact to (2S)-2-hydroxy-3-oxobutyl phosphate.

It belongs to the DMRL synthase family.

It carries out the reaction (2S)-2-hydroxy-3-oxobutyl phosphate + 5-amino-6-(D-ribitylamino)uracil = 6,7-dimethyl-8-(1-D-ribityl)lumazine + phosphate + 2 H2O + H(+). It functions in the pathway cofactor biosynthesis; riboflavin biosynthesis; riboflavin from 2-hydroxy-3-oxobutyl phosphate and 5-amino-6-(D-ribitylamino)uracil: step 1/2. In terms of biological role, catalyzes the formation of 6,7-dimethyl-8-ribityllumazine by condensation of 5-amino-6-(D-ribitylamino)uracil with 3,4-dihydroxy-2-butanone 4-phosphate. This is the penultimate step in the biosynthesis of riboflavin. The sequence is that of 6,7-dimethyl-8-ribityllumazine synthase from Desulfitobacterium hafniense (strain DSM 10664 / DCB-2).